A 1002-amino-acid chain; its full sequence is Ephrin type-B receptor 5 (1002 aa).

The N-terminal stretch at 1–29 (MDSNADISARRVSGMDWLWLVCFFHLVTS) is a signal peptide. At 30–564 (LEEILLDTTG…AQDRLPLIVG (535 aa)) the chain is on the extracellular side. An Eph LBD domain is found at 31 to 213 (EEILLDTTGE…FFYKCPAVVK (183 aa)). Fibronectin type-III domains lie at 344 to 452 (APRD…TSQS) and 453 to 548 (VPSA…TLMA). N-linked (GlcNAc...) asparagine glycosylation is present at asparagine 446. Residues 565 to 585 (SALGGLAFLVIAAIAILAIIF) form a helical membrane-spanning segment. Over 586-1002 (KSKRRETPYT…HLNQLEPVEV (417 aa)) the chain is Cytoplasmic. One can recognise a Protein kinase domain in the interval 637–900 (IKIEEVIGSG…QIVSALDKMI (264 aa)). ATP is bound by residues 643-651 (IGSGEFGEV) and lysine 669. Aspartate 762 acts as the Proton acceptor in catalysis. Residues 906–928 (LKATGTGSSRPSQPLLSNSPPDF) are disordered. Residues 910 to 928 (GTGSSRPSQPLLSNSPPDF) are compositionally biased toward polar residues. The SAM domain maps to 929-993 (PSLSNAHEWL…LNSIQLMKVH (65 aa)). Residues 1000–1002 (VEV) carry the PDZ-binding motif.

It belongs to the protein kinase superfamily. Tyr protein kinase family. Ephrin receptor subfamily. As to expression, most abundant in thymus and detectable in brain, retina, kidney, lung and heart. Not detected in skeletal muscle and liver.

It localises to the membrane. The catalysed reaction is L-tyrosyl-[protein] + ATP = O-phospho-L-tyrosyl-[protein] + ADP + H(+). Functionally, receptor for members of the ephrin-B family. The sequence is that of Ephrin type-B receptor 5 (EPHB5) from Gallus gallus (Chicken).